The sequence spans 199 residues: Recombination protein RecR (199 aa).

The C4-type zinc finger occupies 59-74 (CLNCGNVGTSDICALC). The 95-residue stretch at 82-176 (GELCVVEDVA…KLTSLAQGVP (95 aa)) folds into the Toprim domain.

It belongs to the RecR family.

In terms of biological role, may play a role in DNA repair. It seems to be involved in an RecBC-independent recombinational process of DNA repair. It may act with RecF and RecO. The protein is Recombination protein RecR of Ruegeria sp. (strain TM1040) (Silicibacter sp.).